The primary structure comprises 672 residues: Spermatid perinuclear RNA-binding protein (672 aa).

A DZF domain is found at 5–363 (RSFANDDRHV…ALKRPFEDGL (359 aa)). Disordered regions lie at residues 52-73 (TNKG…GENY) and 349-371 (GAGS…DPNK). The span at 357–371 (RPFEDGLGDDKDPNK) shows a compositional bias: basic and acidic residues. A DRBM 1 domain is found at 387–453 (DLMNALMRLN…AVKVLQAMGY (67 aa)). Residues 466 to 476 (SDEKSDNESKN) are compositionally biased toward basic and acidic residues. Positions 466 to 499 (SDEKSDNESKNETVSSNSSNNTGNSTTETSSTLE) are disordered. Residues 477–497 (ETVSSNSSNNTGNSTTETSST) show a composition bias toward low complexity. A DRBM 2 domain is found at 510-576 (SGKNPVMELN…ALAALEKLFS (67 aa)). Residues Arg-612 and Arg-617 each carry the asymmetric dimethylarginine modification.

Interacts with EIF2AK2. Associates with microtubules; it is unsure whether such interaction is direct or indirect.

It is found in the cytoplasm. In terms of biological role, involved in spermatogenesis and sperm function. Plays a role in regulation of cell growth. Binds to double-stranded DNA and RNA. Binds most efficiently to poly(I:C) RNA than to poly(dI:dC) DNA. Binds also to single-stranded poly(G) RNA. Binds non-specifically to the mRNA PRM1 3'-UTR and adenovirus VA RNA. The sequence is that of Spermatid perinuclear RNA-binding protein (STRBP) from Pongo abelii (Sumatran orangutan).